The chain runs to 181 residues: MKQLLDFLPLIIFFAVYKFFDIYVASGALIAATALQLVISYMLYKKLEKMHLITFVMVTVFGSLTLILHDDSFIKWKVTIVYALFAIALGVSQIMNKPLLKSMLGKELIVEDKVWARVTWYWVSFFVVCGLVNIYVAFSLSQETWVNFKVFGLTALTLINTVLTVLYLFKNMSEEDRKELK.

5 consecutive transmembrane segments (helical) span residues 10 to 30 (LIIFFAVYKFFDIYVASGALI), 50 to 70 (MHLITFVMVTVFGSLTLILHD), 72 to 92 (SFIKWKVTIVYALFAIALGVS), 118 to 138 (VTWYWVSFFVVCGLVNIYVAF), and 148 to 168 (FKVFGLTALTLINTVLTVLYL).

Belongs to the YciB family.

It is found in the cell inner membrane. Functionally, plays a role in cell envelope biogenesis, maintenance of cell envelope integrity and membrane homeostasis. The polypeptide is Inner membrane-spanning protein YciB (Shewanella halifaxensis (strain HAW-EB4)).